A 500-amino-acid polypeptide reads, in one-letter code: Protein-cysteine N-palmitoyltransferase Rasp (500 aa).

A run of 10 helical transmembrane segments spans residues Ile15–Gly35, Gly73–Ile93, Phe105–Leu125, Ile134–Cys154, Ser206–Ile226, Leu243–Leu263, Phe293–Ala313, Leu372–Ile392, Leu429–Ile449, and Gly461–Phe481. His381 is an active-site residue.

Belongs to the membrane-bound acyltransferase family. HHAT subfamily.

The protein resides in the membrane. The enzyme catalyses N-terminal L-cysteinyl-[protein] + hexadecanoyl-CoA = N-terminal N-hexadecanoyl-L-cysteinyl-[protein] + CoA + H(+). It catalyses the reaction N-terminal L-cysteinyl-[protein]-C-terminal glycyl cholesterol ester + hexadecanoyl-CoA = N-terminal N-hexadecanoyl-L-cysteinyl-[protein]-C-terminal glycyl cholesterol ester + CoA + H(+). Functionally, required in hedgehog (hh) expressing cells for production of appropriate signaling activity in embryos and in the imaginal precursors of adult tissues. Acts within the secretory pathway to catalyze N-terminal palmitoylation of Hh; this lipid modification is required for the embryonic and larval patterning activities of the Hh signal. Not required for Wg signaling. This is Protein-cysteine N-palmitoyltransferase Rasp (rasp) from Drosophila melanogaster (Fruit fly).